The chain runs to 163 residues: Nucleotide-binding protein Mmcs_0777 (163 aa).

Belongs to the YajQ family.

Functionally, nucleotide-binding protein. The chain is Nucleotide-binding protein Mmcs_0777 from Mycobacterium sp. (strain MCS).